A 176-amino-acid polypeptide reads, in one-letter code: Large ribosomal subunit protein uL10 (176 aa).

It belongs to the universal ribosomal protein uL10 family. In terms of assembly, part of the ribosomal stalk of the 50S ribosomal subunit. The N-terminus interacts with L11 and the large rRNA to form the base of the stalk. The C-terminus forms an elongated spine to which L12 dimers bind in a sequential fashion forming a multimeric L10(L12)X complex.

In terms of biological role, forms part of the ribosomal stalk, playing a central role in the interaction of the ribosome with GTP-bound translation factors. The protein is Large ribosomal subunit protein uL10 of Saccharophagus degradans (strain 2-40 / ATCC 43961 / DSM 17024).